A 136-amino-acid polypeptide reads, in one-letter code: Large ribosomal subunit protein uL16 (136 aa).

This sequence belongs to the universal ribosomal protein uL16 family. In terms of assembly, part of the 50S ribosomal subunit.

Binds 23S rRNA and is also seen to make contacts with the A and possibly P site tRNAs. This chain is Large ribosomal subunit protein uL16, found in Rickettsia rickettsii (strain Iowa).